Consider the following 93-residue polypeptide: Small ribosomal subunit protein bS18 (93 aa).

This sequence belongs to the bacterial ribosomal protein bS18 family. In terms of assembly, part of the 30S ribosomal subunit. Forms a tight heterodimer with protein bS6.

Functionally, binds as a heterodimer with protein bS6 to the central domain of the 16S rRNA, where it helps stabilize the platform of the 30S subunit. The sequence is that of Small ribosomal subunit protein bS18 from Delftia acidovorans (strain DSM 14801 / SPH-1).